The primary structure comprises 409 residues: tRNA(Met) cytidine acetate ligase (409 aa).

Residues 7–20 (VVEY…HLHH), glycine 102, asparagine 169, and arginine 194 each bind ATP.

It belongs to the TmcAL family.

The protein resides in the cytoplasm. The enzyme catalyses cytidine(34) in elongator tRNA(Met) + acetate + ATP = N(4)-acetylcytidine(34) in elongator tRNA(Met) + AMP + diphosphate. Its function is as follows. Catalyzes the formation of N(4)-acetylcytidine (ac(4)C) at the wobble position of elongator tRNA(Met), using acetate and ATP as substrates. First activates an acetate ion to form acetyladenylate (Ac-AMP) and then transfers the acetyl group to tRNA to form ac(4)C34. The protein is tRNA(Met) cytidine acetate ligase of Clostridium botulinum (strain Loch Maree / Type A3).